A 269-amino-acid polypeptide reads, in one-letter code: Ribosomal RNA large subunit methyltransferase E (269 aa).

S-adenosyl-L-methionine contacts are provided by Gly48, Trp50, Asp68, Asp86, and Asp111. The active-site Proton acceptor is the Lys151. The TRAM domain maps to 198–256 (PVAAGDRIEVTVEERGDEGDGIAYVEGYSIFVSDADVGETVTVEVVDAKPRFGFATRVD).

It belongs to the class I-like SAM-binding methyltransferase superfamily. RNA methyltransferase RlmE family.

The protein localises to the cytoplasm. The catalysed reaction is uridine(2552) in 23S rRNA + S-adenosyl-L-methionine = 2'-O-methyluridine(2552) in 23S rRNA + S-adenosyl-L-homocysteine + H(+). In terms of biological role, specifically methylates the uridine in position 2552 of 23S rRNA at the 2'-O position of the ribose in the fully assembled 50S ribosomal subunit. The polypeptide is Ribosomal RNA large subunit methyltransferase E (Halorubrum lacusprofundi (strain ATCC 49239 / DSM 5036 / JCM 8891 / ACAM 34)).